The following is a 192-amino-acid chain: Imidazoleglycerol-phosphate dehydratase (192 aa).

The protein belongs to the imidazoleglycerol-phosphate dehydratase family.

It localises to the cytoplasm. It catalyses the reaction D-erythro-1-(imidazol-4-yl)glycerol 3-phosphate = 3-(imidazol-4-yl)-2-oxopropyl phosphate + H2O. Its pathway is amino-acid biosynthesis; L-histidine biosynthesis; L-histidine from 5-phospho-alpha-D-ribose 1-diphosphate: step 6/9. This is Imidazoleglycerol-phosphate dehydratase from Staphylococcus saprophyticus subsp. saprophyticus (strain ATCC 15305 / DSM 20229 / NCIMB 8711 / NCTC 7292 / S-41).